Consider the following 117-residue polypeptide: Putative small ubiquitin-related modifier 6 (117 aa).

The disordered stretch occupies residues 1–30 (MSTKSSSIHGRNEVKMEGEKRKDVESESTH). The segment covering 10–28 (GRNEVKMEGEKRKDVESES) has biased composition (basic and acidic residues). Residues 31-108 (VTLNVKGQDE…IDALLPQESG (78 aa)) enclose the Ubiquitin-like domain. A Glycyl lysine isopeptide (Gly-Lys) (interchain with K-? in acceptor proteins) cross-link involves residue Gly-108.

The protein belongs to the ubiquitin family. SUMO subfamily. As to quaternary structure, interacts with SAE2, SCE1, SIZ1 and MMS21 Covalently attached to a number of proteins.

It localises to the nucleus. The protein localises to the cytoplasm. Functionally, ubiquitin-like protein which can be covalently attached to target lysines as a monomer. Does not seem to be involved in protein degradation and may function as an antagonist of ubiquitin in the degradation process. The polypeptide is Putative small ubiquitin-related modifier 6 (SUMO6) (Arabidopsis thaliana (Mouse-ear cress)).